Here is an 89-residue protein sequence, read N- to C-terminus: MYSLEISLRYSPFPLSIQKKDYEDVKRIYDEIKDFMQGKNTNSDLIEISCEKVQDKLITVLAKEVISVQIYEKSSVAGGSKRPGFSLDI.

Belongs to the UPF0367 family.

The protein is UPF0367 protein P9515_01381 of Prochlorococcus marinus (strain MIT 9515).